The sequence spans 274 residues: MAVRKFKPTTPGQRHKIIGTFEEITASVPEKSLVYGKKSSGGRNNEGKMTMRYLGGGHRKVIRIVDFKRNKDGVPAVVKTIEYDPNRSARIALLFYADGEKRYIIAPNGLQVGATLMSGENAAPEIGNALPLQNIPVGTVIHNIELRPGQGAALVRSAGNFAQLTSREGKYCVIKLPSGEVRQILSTCKATIGSVGNSDHGLESSGKAGRSRWQGRRPRNRGVVMNPVDHPMGGGEGRASGGHPRSRKGLYAKGLKTRAPKKQSSKYIIERRKK.

Positions 195–274 (VGNSDHGLES…SKYIIERRKK (80 aa)) are disordered. Basic residues-rich tracts occupy residues 209 to 220 (GRSRWQGRRPRN) and 244 to 264 (PRSRKGLYAKGLKTRAPKKQS).

It belongs to the universal ribosomal protein uL2 family. As to quaternary structure, part of the 50S ribosomal subunit. Forms a bridge to the 30S subunit in the 70S ribosome.

One of the primary rRNA binding proteins. Required for association of the 30S and 50S subunits to form the 70S ribosome, for tRNA binding and peptide bond formation. It has been suggested to have peptidyltransferase activity; this is somewhat controversial. Makes several contacts with the 16S rRNA in the 70S ribosome. This is Large ribosomal subunit protein uL2 from Bacteroides fragilis (strain ATCC 25285 / DSM 2151 / CCUG 4856 / JCM 11019 / LMG 10263 / NCTC 9343 / Onslow / VPI 2553 / EN-2).